We begin with the raw amino-acid sequence, 292 residues long: Short chain dehydrogenase mpl6 (292 aa).

V37, D95, N122, R156, Y188, K192, V221, and T223 together coordinate NADP(+). Y188 functions as the Proton donor in the catalytic mechanism. The active-site Lowers pKa of active site Tyr is the K192.

It belongs to the short-chain dehydrogenases/reductases (SDR) family.

It participates in mycotoxin biosynthesis. Its function is as follows. Short chain dehydrogenase; part of the gene cluster that mediates the biosynthesis of the mycotoxin citrinin, a hepato-nephrotoxic compound to humans due to inhibition of respiration complex III. The pathway begins with the synthesis of a keto-aldehyde intermediate by the citrinin PKS (pksCT) from successive condensations of 4 malonyl-CoA units, presumably with a simple acetyl-CoA starter unit. Release of the keto-aldehyde intermediate is consistent with the presence of the C-terminal reductive release domain. Mp11 collaborates with pksCT by catalyzing the hydrolysis of ACP-bound acyl intermediates to free the ACP from stalled intermediates. Mpl2 then catalyzes the oxidation of the C-12 methyl of the ketone intermediate to an alcohol intermediate which is further oxidized by the oxidoreductase mpl7 to produce a bisaldehyde intermediate. The fourth catalytic step is catalyzed by the mpl4 aldehyde dehydrogenase. The final transformation is the reduction of C-3 by mpl6 to provide the chemically stable citrinin nucleus. The protein is Short chain dehydrogenase mpl6 of Monascus purpureus (Red mold).